The primary structure comprises 224 residues: Metalloproteinase inhibitor 4 (224 aa).

Positions 1-29 (MPWSPLAALSWALVLRLLALLWPPGRGEA) are cleaved as a signal peptide. C30 provides a ligand contact to Zn(2+). Involved in metalloproteinase-binding stretches follow at residues 30–33 (CSCA) and 99–100 (SS). Disulfide bonds link C30–C102, C32–C131, C42–C156, C158–C205, C163–C168, and C176–C197. The region spanning 30–156 (CSCAPAHPQQ…SLNHHYHQNC (127 aa)) is the NTR domain.

The protein belongs to the protease inhibitor I35 (TIMP) family. Expressed in brain, heart, ovary and skeletal muscle.

It is found in the secreted. Complexes with metalloproteinases (such as collagenases) and irreversibly inactivates them by binding to their catalytic zinc cofactor. The polypeptide is Metalloproteinase inhibitor 4 (Timp4) (Mus musculus (Mouse)).